Here is a 68-residue protein sequence, read N- to C-terminus: DNA-directed RNA polymerase subunit omega (68 aa).

Belongs to the RNA polymerase subunit omega family. As to quaternary structure, the RNAP catalytic core consists of 2 alpha, 1 beta, 1 beta' and 1 omega subunit. When a sigma factor is associated with the core the holoenzyme is formed, which can initiate transcription.

The catalysed reaction is RNA(n) + a ribonucleoside 5'-triphosphate = RNA(n+1) + diphosphate. Functionally, promotes RNA polymerase assembly. Latches the N- and C-terminal regions of the beta' subunit thereby facilitating its interaction with the beta and alpha subunits. This chain is DNA-directed RNA polymerase subunit omega, found in Sulfurovum sp. (strain NBC37-1).